The sequence spans 942 residues: DNA polymerase I (942 aa).

The 93-residue stretch at 177 to 269 (EPDQLADLRG…LEAARIGVYD (93 aa)) folds into the 5'-3' exonuclease domain. In terms of domain architecture, 3'-5' exonuclease spans 340–522 (TIVRDATALA…LTERLQRQLE (183 aa)).

The protein belongs to the DNA polymerase type-A family. In terms of assembly, single-chain monomer with multiple functions.

It carries out the reaction DNA(n) + a 2'-deoxyribonucleoside 5'-triphosphate = DNA(n+1) + diphosphate. In terms of biological role, in addition to polymerase activity, this DNA polymerase exhibits 3'-5' and 5'-3' exonuclease activity. This is DNA polymerase I (polA) from Chloroflexus aurantiacus (strain ATCC 29366 / DSM 635 / J-10-fl).